Here is a 681-residue protein sequence, read N- to C-terminus: Dipeptidyl carboxypeptidase (681 aa).

His470 is a Zn(2+) binding site. The active site involves Glu471. Residues His474 and His477 each contribute to the Zn(2+) site.

The protein belongs to the peptidase M3 family. Zn(2+) is required as a cofactor.

The protein localises to the cytoplasm. The catalysed reaction is Hydrolysis of unblocked, C-terminal dipeptides from oligopeptides, with broad specificity. Does not hydrolyze bonds in which P1' is Pro, or both P1 and P1' are Gly.. With respect to regulation, stimulated by Mn(2+), Mg(2+), Co(2+) and Ca(2+), inhibited by Cu(2+), Ni(2+), Zn(2+), chymostatin and 1,10-phenanthroline. Removes dipeptides from the C-termini of N-blocked tripeptides, tetrapeptides and larger peptides. This Escherichia coli (strain K12) protein is Dipeptidyl carboxypeptidase.